Here is a 463-residue protein sequence, read N- to C-terminus: L-seryl-tRNA(Sec) selenium transferase (463 aa).

Lys-295 bears the N6-(pyridoxal phosphate)lysine mark.

It belongs to the SelA family. In terms of assembly, homodecamer; pentamer of dimers. Binds only one seryl-tRNA(Sec) per dimer. Pyridoxal 5'-phosphate serves as cofactor.

Its subcellular location is the cytoplasm. The enzyme catalyses L-seryl-tRNA(Sec) + selenophosphate + H(+) = L-selenocysteinyl-tRNA(Sec) + phosphate. It participates in aminoacyl-tRNA biosynthesis; selenocysteinyl-tRNA(Sec) biosynthesis; selenocysteinyl-tRNA(Sec) from L-seryl-tRNA(Sec) (bacterial route): step 1/1. Its function is as follows. Converts seryl-tRNA(Sec) to selenocysteinyl-tRNA(Sec) required for selenoprotein biosynthesis. In Salmonella paratyphi A (strain AKU_12601), this protein is L-seryl-tRNA(Sec) selenium transferase.